Reading from the N-terminus, the 107-residue chain is U1-lycotoxin-Ls1s (107 aa).

A signal peptide spans 1 to 20; that stretch reads MMKVLVVVALLVTLISYSSS. Positions 21–41 are excised as a propeptide; the sequence is EGIDDLEADELLSLMANEQTR. Cystine bridges form between Cys44–Cys59, Cys51–Cys68, Cys58–Cys86, and Cys70–Cys84.

This sequence belongs to the neurotoxin 19 (CSTX) family. 04 (U1-Lctx) subfamily. In terms of tissue distribution, expressed by the venom gland.

It is found in the secreted. This chain is U1-lycotoxin-Ls1s, found in Lycosa singoriensis (Wolf spider).